The following is a 72-amino-acid chain: Translation initiation factor IF-1 (72 aa).

An S1-like domain is found at Met1–Arg72.

The protein belongs to the IF-1 family. Component of the 30S ribosomal translation pre-initiation complex which assembles on the 30S ribosome in the order IF-2 and IF-3, IF-1 and N-formylmethionyl-tRNA(fMet); mRNA recruitment can occur at any time during PIC assembly.

The protein resides in the cytoplasm. In terms of biological role, one of the essential components for the initiation of protein synthesis. Stabilizes the binding of IF-2 and IF-3 on the 30S subunit to which N-formylmethionyl-tRNA(fMet) subsequently binds. Helps modulate mRNA selection, yielding the 30S pre-initiation complex (PIC). Upon addition of the 50S ribosomal subunit IF-1, IF-2 and IF-3 are released leaving the mature 70S translation initiation complex. The polypeptide is Translation initiation factor IF-1 (Hahella chejuensis (strain KCTC 2396)).